A 467-amino-acid chain; its full sequence is Xanthan biosynthesis protein XanB (467 aa).

This sequence belongs to the mannose-6-phosphate isomerase type 2 family.

The enzyme catalyses D-mannose 6-phosphate = D-fructose 6-phosphate. It catalyses the reaction alpha-D-mannose 1-phosphate + GTP + H(+) = GDP-alpha-D-mannose + diphosphate. It participates in nucleotide-sugar biosynthesis; GDP-alpha-D-mannose biosynthesis; GDP-alpha-D-mannose from alpha-D-mannose 1-phosphate (GTP route): step 1/1. It functions in the pathway nucleotide-sugar biosynthesis; GDP-alpha-D-mannose biosynthesis; alpha-D-mannose 1-phosphate from D-fructose 6-phosphate: step 1/2. In terms of biological role, involved in xanthan production. The chain is Xanthan biosynthesis protein XanB (xanB) from Xanthomonas campestris pv. campestris (strain B100).